The chain runs to 427 residues: Adenylosuccinate synthetase (427 aa).

GTP is bound by residues 12–18 (GDEGKGK) and 40–42 (GHT). Asp13 acts as the Proton acceptor in catalysis. Asp13 and Gly40 together coordinate Mg(2+). IMP is bound by residues 13–16 (DEGK), 38–41 (NAGH), Thr128, Arg142, Gln223, Thr238, and Arg302. His41 serves as the catalytic Proton donor. Position 298–304 (298–304 (VTTGRAR)) interacts with substrate. Residues Arg304, 330 to 332 (KLD), and 412 to 414 (GVG) each bind GTP.

It belongs to the adenylosuccinate synthetase family. In terms of assembly, homodimer. The cofactor is Mg(2+).

It localises to the cytoplasm. It carries out the reaction IMP + L-aspartate + GTP = N(6)-(1,2-dicarboxyethyl)-AMP + GDP + phosphate + 2 H(+). It participates in purine metabolism; AMP biosynthesis via de novo pathway; AMP from IMP: step 1/2. Its function is as follows. Plays an important role in the de novo pathway of purine nucleotide biosynthesis. Catalyzes the first committed step in the biosynthesis of AMP from IMP. In Parafrankia sp. (strain EAN1pec), this protein is Adenylosuccinate synthetase.